Consider the following 461-residue polypeptide: Argininosuccinate lyase (461 aa).

The protein belongs to the lyase 1 family. Argininosuccinate lyase subfamily.

It localises to the cytoplasm. It carries out the reaction 2-(N(omega)-L-arginino)succinate = fumarate + L-arginine. Its pathway is amino-acid biosynthesis; L-arginine biosynthesis; L-arginine from L-ornithine and carbamoyl phosphate: step 3/3. This Limosilactobacillus reuteri subsp. reuteri (strain JCM 1112) (Lactobacillus reuteri) protein is Argininosuccinate lyase.